We begin with the raw amino-acid sequence, 319 residues long: Acetyl-coenzyme A carboxylase carboxyl transferase subunit alpha (319 aa).

Residues 35–296 form the CoA carboxyltransferase C-terminal domain; that stretch reads DLDKEIEQLE…KDMLVKQLEE (262 aa).

The protein belongs to the AccA family. In terms of assembly, acetyl-CoA carboxylase is a heterohexamer composed of biotin carboxyl carrier protein (AccB), biotin carboxylase (AccC) and two subunits each of ACCase subunit alpha (AccA) and ACCase subunit beta (AccD).

The protein resides in the cytoplasm. The catalysed reaction is N(6)-carboxybiotinyl-L-lysyl-[protein] + acetyl-CoA = N(6)-biotinyl-L-lysyl-[protein] + malonyl-CoA. The protein operates within lipid metabolism; malonyl-CoA biosynthesis; malonyl-CoA from acetyl-CoA: step 1/1. Its function is as follows. Component of the acetyl coenzyme A carboxylase (ACC) complex. First, biotin carboxylase catalyzes the carboxylation of biotin on its carrier protein (BCCP) and then the CO(2) group is transferred by the carboxyltransferase to acetyl-CoA to form malonyl-CoA. This chain is Acetyl-coenzyme A carboxylase carboxyl transferase subunit alpha, found in Vibrio atlanticus (strain LGP32) (Vibrio splendidus (strain Mel32)).